Consider the following 420-residue polypeptide: Gamma-glutamyl phosphate reductase (420 aa).

This sequence belongs to the gamma-glutamyl phosphate reductase family.

The protein localises to the cytoplasm. The catalysed reaction is L-glutamate 5-semialdehyde + phosphate + NADP(+) = L-glutamyl 5-phosphate + NADPH + H(+). It functions in the pathway amino-acid biosynthesis; L-proline biosynthesis; L-glutamate 5-semialdehyde from L-glutamate: step 2/2. Catalyzes the NADPH-dependent reduction of L-glutamate 5-phosphate into L-glutamate 5-semialdehyde and phosphate. The product spontaneously undergoes cyclization to form 1-pyrroline-5-carboxylate. The chain is Gamma-glutamyl phosphate reductase from Neisseria meningitidis serogroup A / serotype 4A (strain DSM 15465 / Z2491).